We begin with the raw amino-acid sequence, 114 residues long: Nucleoid-associated protein PCC7424_2224 (114 aa).

This sequence belongs to the YbaB/EbfC family. As to quaternary structure, homodimer.

It is found in the cytoplasm. It localises to the nucleoid. Binds to DNA and alters its conformation. May be involved in regulation of gene expression, nucleoid organization and DNA protection. In Gloeothece citriformis (strain PCC 7424) (Cyanothece sp. (strain PCC 7424)), this protein is Nucleoid-associated protein PCC7424_2224.